The following is a 353-amino-acid chain: MFKRFIFITLSLLVFACFKSNKKSIKSDKVVVGVLAHGSFYDKGYNQSVHDGVVKLRDNFGIKLITKSLRPYPIEGKRLLTVDEAMTEDAYEVQKNPLNLFWLIGYRFSDLSVKLSYERPDIYYGIIDAFDYGDIQVPKNSLAIKFRNEEAAFLAGYIAAKMSRKEKIGFLTGPMSEHLKDFKFGFKAGIFYANPKLRLVSKKAPSLFDKEKGKAMALFMYKEDKVGVIFPIAGITGLGVYDAAKELGPKYYVIGLNQDQSYIAPQNVITSIIKDIGKVIYSISSEYINNRVFKGGIIIDRGLKEGVIEIVKDPDVLNNRLVDEVIDLENKIISGEIIVPDSEYAFDLFKSKL.

The signal sequence occupies residues 1 to 16; the sequence is MFKRFIFITLSLLVFA. C17 carries the N-palmitoyl cysteine lipid modification. C17 carries S-diacylglycerol cysteine lipidation.

It belongs to the BMP lipoprotein family. As to quaternary structure, monomer.

It is found in the cell inner membrane. In terms of biological role, may be part of an ABC-type nucleoside uptake system involved in the purine salvage pathway. In Borreliella burgdorferi (strain N40) (Borrelia burgdorferi), this protein is Basic membrane protein C (bmpC).